Reading from the N-terminus, the 623-residue chain is MEHAVAPCVLYPGTEPGAAGESESEGAASPAQTPCSLGASLCFSSGEESPPQSLASAAEGAATSPPSSGGPRVVERQWEAGSAGAASPEELASPEERACPEEPAAPSPEPRVWLEDPASPEEPGEPAPVPPGFGAVYGEPDLVLEVSGRRLRAHKAVLAARSDYFRARASRDVLRVQGVSLTALRLLLADAYSGRMAGVRPDNVAEVVAGARRLQLPGAAQRATDAVGPQLSLANCYEVLSAAKRQRLNELRDAAYCFMSDHYLEVLREPAVFGRLSGAERDLLLRRRLRAGRAHLLAAALGPAGERAGSRPQSPSGDADARGDAAVYCFHAAAGEWRELTRLPEGAPARGCGLCVLYNYLFVAGGVAPAGPDGRARPSDQVFCYNPATDSWSAVRPLRQARSQLRLLALDGHLYAVGGECLLSVERYDPRADRWAPVAPLPRGAFAVAHEATTCHGEIYVSGGSLFYRLLKYDPRRDEWQECPCSSSRERSADMVALDGFIYRFDLSGSRGEAQAAGPSGVSVSRYHCLAKQWSPCVAPLRLPGGPTGLQPFRCAALDGAIYCVSRAGTWRFQPAREGEAGGDAGQGGGFEALGAPLDVRGVLIPFALSLPEKPPRGEQGAP.

The interval 1-129 (MEHAVAPCVL…PEEPGEPAPV (129 aa)) is disordered. Positions 12-31 (PGTEPGAAGESESEGAASPA) are enriched in low complexity. A compositionally biased stretch (polar residues) spans 42–55 (CFSSGEESPPQSLA). 4 positions are modified to phosphoserine: Ser-64, Ser-67, Ser-87, and Ser-107. The segment covering 79–91 (EAGSAGAASPEEL) has biased composition (low complexity). One can recognise a BTB domain in the interval 140 to 196 (PDLVLEVSGRRLRAHKAVLAARSDYFRARASRDVLRVQGVSLTALRLLLADAYSGRM). Kelch repeat units follow at residues 311-359 (RPQS…VLYN), 360-412 (YLFV…ALDG), 413-455 (HLYA…ATTC), and 458-500 (EIYV…ALDG).

This chain is Kelch repeat and BTB domain-containing protein 11 (KBTBD11), found in Homo sapiens (Human).